The primary structure comprises 243 residues: Adenosylcobinamide-GDP ribazoletransferase (243 aa).

5 consecutive transmembrane segments (helical) span residues 31 to 51 (LLFYPLVGVVFGTLLLGFNAL), 55 to 75 (APLLLHAALLLSAWVLLSGGL), 109 to 129 (IAVVTLVVVLLLKFAAIVALI), 135 to 155 (IGLLLAPLIGRSAMLALFLGT), and 188 to 208 (VVLAGWSGIAALLVCAVCFYW).

Belongs to the CobS family. Mg(2+) is required as a cofactor.

Its subcellular location is the cell inner membrane. The catalysed reaction is alpha-ribazole + adenosylcob(III)inamide-GDP = adenosylcob(III)alamin + GMP + H(+). The enzyme catalyses alpha-ribazole 5'-phosphate + adenosylcob(III)inamide-GDP = adenosylcob(III)alamin 5'-phosphate + GMP + H(+). The protein operates within cofactor biosynthesis; adenosylcobalamin biosynthesis; adenosylcobalamin from cob(II)yrinate a,c-diamide: step 7/7. In terms of biological role, joins adenosylcobinamide-GDP and alpha-ribazole to generate adenosylcobalamin (Ado-cobalamin). Also synthesizes adenosylcobalamin 5'-phosphate from adenosylcobinamide-GDP and alpha-ribazole 5'-phosphate. This is Adenosylcobinamide-GDP ribazoletransferase from Pseudomonas syringae pv. tomato (strain ATCC BAA-871 / DC3000).